The following is a 219-amino-acid chain: MESGARPIGSSCSSPAALSREYKLVMLGAGGVGKSAMTMQFISHRFPEDHDPTIEDAYKIRIRIDDEPANLDILDTAGQAEFTAMRDQYMRAGEGFIICYSITDRRSFHEVREFKQLIYRVRRTDDTPVVLVGNKSDLKQLRQVSKEEGLSLAREFSCPFFETSAAYRYYIDDVFHALVREIRKKEKELVLAMEKKAKPKNSVWKRLKSPFRRKKDSVT.

GTP is bound by residues Gly28–Ser35, Asp75–Gln79, and Asn134–Asp137.

The protein belongs to the small GTPase superfamily. Ras family. In terms of assembly, interacts with AFDN, the C-terminal domain of RALGDS and RLF, but not with RIN1 and PIK3CA. RLF binds exclusively to the active GTP-bound form. Strongly interacts with BRAF, but only weakly with RAF1. BARF and RAF1 association is dependent upon the GTP-bound state. Interacts with RGL3. Expressed in many tissues.

It localises to the cell membrane. The catalysed reaction is GTP + H2O = GDP + phosphate + H(+). Alternates between an inactive form bound to GDP and an active form bound to GTP. Its function is as follows. Plays a crucial role in coupling NGF stimulation to the activation of both EPHB2 and MAPK14 signaling pathways and in NGF-dependent neuronal differentiation. Involved in ELK1 transactivation through the Ras-MAPK signaling cascade that mediates a wide variety of cellular functions, including cell proliferation, survival, and differentiation. The sequence is that of GTP-binding protein Rit1 (Rit1) from Mus musculus (Mouse).